The sequence spans 151 residues: Small ribosomal subunit protein bS6 (151 aa).

The interval 94 to 151 (EEHEQGPSAMMRKRDDDDRGERGERPRGPRPERGERGERGERGPRRPREDNIGEEGLY) is disordered. Over residues 105-144 (RKRDDDDRGERGERPRGPRPERGERGERGERGPRRPREDN) the composition is skewed to basic and acidic residues.

It belongs to the bacterial ribosomal protein bS6 family.

Functionally, binds together with bS18 to 16S ribosomal RNA. This chain is Small ribosomal subunit protein bS6, found in Beijerinckia indica subsp. indica (strain ATCC 9039 / DSM 1715 / NCIMB 8712).